Consider the following 832-residue polypeptide: DNA polymerase I, thermostable (832 aa).

The 86-residue stretch at 175–260 folds into the 5'-3' exonuclease domain; that stretch reads RPDQWADYRA…DLPLEVDFAK (86 aa). The polymerase stretch occupies residues 410–832; sequence ERLFANLWGR…IGEDWLSAKE (423 aa).

It belongs to the DNA polymerase type-A family.

The catalysed reaction is DNA(n) + a 2'-deoxyribonucleoside 5'-triphosphate = DNA(n+1) + diphosphate. In addition to polymerase activity, this DNA polymerase exhibits 5'-3' exonuclease activity. Unlikely to have 3'-5' exonuclease activity due to absence of a 3'-5' exonuclease domain. The polypeptide is DNA polymerase I, thermostable (polA) (Thermus aquaticus).